A 23-amino-acid polypeptide reads, in one-letter code: Basic phospholipase A2 CTs-G6 (23 aa).

Ca(2+) is required as a cofactor. Post-translationally, contains 7 disulfide bonds. As to expression, expressed by the venom gland.

The protein localises to the secreted. The enzyme catalyses a 1,2-diacyl-sn-glycero-3-phosphocholine + H2O = a 1-acyl-sn-glycero-3-phosphocholine + a fatty acid + H(+). Functionally, snake venom phospholipase A2 (PLA2) that induces local edema a few hours after injection (5-10 ug) in the hind paw. PLA2 catalyzes the calcium-dependent hydrolysis of the 2-acyl groups in 3-sn-phosphoglycerides. In Trimeresurus stejnegeri (Chinese green tree viper), this protein is Basic phospholipase A2 CTs-G6.